The chain runs to 402 residues: Homoserine O-acetyltransferase (402 aa).

Over residues 1–17 the composition is skewed to polar residues; sequence MDWQTTSADTAPSSFIT. Positions 1–39 are disordered; sequence MDWQTTSADTAPSSFITEEQDRSLFGKPPASGAWKESDP. Residues 78-388 form the AB hydrolase-1 domain; the sequence is NAVLVLHALT…HFGHDGFLIE (311 aa). Residue Ser-183 is the Nucleophile of the active site. Arg-255 lines the substrate pocket. Catalysis depends on residues Asp-349 and His-382. Asp-383 is a binding site for substrate.

This sequence belongs to the AB hydrolase superfamily. MetX family. In terms of assembly, homodimer.

It is found in the cytoplasm. It carries out the reaction L-homoserine + acetyl-CoA = O-acetyl-L-homoserine + CoA. It functions in the pathway amino-acid biosynthesis; L-methionine biosynthesis via de novo pathway; O-acetyl-L-homoserine from L-homoserine: step 1/1. Its function is as follows. Transfers an acetyl group from acetyl-CoA to L-homoserine, forming acetyl-L-homoserine. The chain is Homoserine O-acetyltransferase from Leifsonia xyli subsp. xyli (strain CTCB07).